Here is a 129-residue protein sequence, read N- to C-terminus: MARVKRAVNAQKKRRSILEASSGYRGQRSRLYRKAKEQQLHSLTYAYRDRRARKGDFRKLWITRINAAARANDITYNRLIQGLRLAEIEVDRKNLAELAVSDAAAFAGLVALAKAALPADVNAPAGEAA.

Belongs to the bacterial ribosomal protein bL20 family.

Its function is as follows. Binds directly to 23S ribosomal RNA and is necessary for the in vitro assembly process of the 50S ribosomal subunit. It is not involved in the protein synthesizing functions of that subunit. In Rhodococcus jostii (strain RHA1), this protein is Large ribosomal subunit protein bL20.